Consider the following 412-residue polypeptide: Argininosuccinate synthase (412 aa).

An ATP-binding site is contributed by 10–18 (AYSGGLDTS). Tyrosine 89 serves as a coordination point for L-citrulline. An ATP-binding site is contributed by glycine 119. Residues threonine 121, asparagine 125, and aspartate 126 each contribute to the L-aspartate site. Asparagine 125 is a binding site for L-citrulline. Arginine 129, serine 177, glutamate 261, and tyrosine 273 together coordinate L-citrulline.

It belongs to the argininosuccinate synthase family. Type 1 subfamily. Homotetramer.

It is found in the cytoplasm. The enzyme catalyses L-citrulline + L-aspartate + ATP = 2-(N(omega)-L-arginino)succinate + AMP + diphosphate + H(+). The protein operates within amino-acid biosynthesis; L-arginine biosynthesis; L-arginine from L-ornithine and carbamoyl phosphate: step 2/3. This Bifidobacterium longum (strain NCC 2705) protein is Argininosuccinate synthase.